The primary structure comprises 540 residues: Suppressor of tumorigenicity 7 protein-like (540 aa).

Helical transmembrane passes span 24 to 44, 68 to 88, 475 to 495, and 502 to 522; these read WSWTYICALWFAMVLTMVYVL, FYVALTGTSSLISGLILIFEW, LPFFILFTAGLCSFCAMLAML, and LMGVFVKAFFSTLFAPLGFFA.

It belongs to the ST7 family.

Its subcellular location is the membrane. This chain is Suppressor of tumorigenicity 7 protein-like (st7l), found in Danio rerio (Zebrafish).